We begin with the raw amino-acid sequence, 329 residues long: Carbohydrate sulfotransferase chst-1 (329 aa).

Topologically, residues 1-3 (MLK) are cytoplasmic. Residues 4–23 (WFIISCCLLTAISYSTYYLF) traverse the membrane as a helical; Signal-anchor for type II membrane protein segment. The Lumenal portion of the chain corresponds to 24–329 (TSNSWIKTVK…FDFDTTFINS (306 aa)). 3'-phosphoadenylyl sulfate contacts are provided by residues 91-97 (KKSMSTL) and 157-165 (RDPIARFIS).

The protein belongs to the sulfotransferase 2 family. In terms of tissue distribution, highly expressed in the head and tail of hermaphrodites, in particular in amphid and phasmid sheath cells.

Its subcellular location is the golgi apparatus membrane. The enzyme catalyses chondroitin beta-D-glucuronate + n 3'-phosphoadenylyl sulfate = chondroitin 4'-sulfate + n adenosine 3',5'-bisphosphate + n H(+). In terms of biological role, catalyzes the transfer of sulfate to position 4 of non-reducing N-acetylgalactosamine (GalNAc) residue of chondroitin. This Caenorhabditis elegans protein is Carbohydrate sulfotransferase chst-1.